Reading from the N-terminus, the 156-residue chain is 6,7-dimethyl-8-ribityllumazine synthase (156 aa).

5-amino-6-(D-ribitylamino)uracil is bound by residues Phe22, 57 to 59, and 81 to 83; these read AYE and SVI. 86 to 87 provides a ligand contact to (2S)-2-hydroxy-3-oxobutyl phosphate; the sequence is GT. The active-site Proton donor is the His89. 5-amino-6-(D-ribitylamino)uracil is bound at residue Phe114. Arg128 provides a ligand contact to (2S)-2-hydroxy-3-oxobutyl phosphate.

This sequence belongs to the DMRL synthase family. In terms of assembly, forms an icosahedral capsid composed of 60 subunits, arranged as a dodecamer of pentamers.

It carries out the reaction (2S)-2-hydroxy-3-oxobutyl phosphate + 5-amino-6-(D-ribitylamino)uracil = 6,7-dimethyl-8-(1-D-ribityl)lumazine + phosphate + 2 H2O + H(+). It participates in cofactor biosynthesis; riboflavin biosynthesis; riboflavin from 2-hydroxy-3-oxobutyl phosphate and 5-amino-6-(D-ribitylamino)uracil: step 1/2. Its function is as follows. Catalyzes the formation of 6,7-dimethyl-8-ribityllumazine by condensation of 5-amino-6-(D-ribitylamino)uracil with 3,4-dihydroxy-2-butanone 4-phosphate. This is the penultimate step in the biosynthesis of riboflavin. The chain is 6,7-dimethyl-8-ribityllumazine synthase from Photobacterium profundum (strain SS9).